The primary structure comprises 502 residues: ATP synthase subunit alpha (502 aa).

169 to 176 (GDRQTGKT) serves as a coordination point for ATP.

This sequence belongs to the ATPase alpha/beta chains family. F-type ATPases have 2 components, CF(1) - the catalytic core - and CF(0) - the membrane proton channel. CF(1) has five subunits: alpha(3), beta(3), gamma(1), delta(1), epsilon(1). CF(0) has three main subunits: a(1), b(2) and c(9-12). The alpha and beta chains form an alternating ring which encloses part of the gamma chain. CF(1) is attached to CF(0) by a central stalk formed by the gamma and epsilon chains, while a peripheral stalk is formed by the delta and b chains.

The protein localises to the cell membrane. It carries out the reaction ATP + H2O + 4 H(+)(in) = ADP + phosphate + 5 H(+)(out). Produces ATP from ADP in the presence of a proton gradient across the membrane. The alpha chain is a regulatory subunit. The polypeptide is ATP synthase subunit alpha (Exiguobacterium sp. (strain ATCC BAA-1283 / AT1b)).